The sequence spans 310 residues: Zinc finger protein 42 homolog (310 aa).

The segment covering 1 to 15 (MSQQLKKRAKTRHQK) has biased composition (basic residues). The segment at 1–35 (MSQQLKKRAKTRHQKGLGGRAPSGAKPRQGKSSQD) is disordered. 4 consecutive C2H2-type zinc fingers follow at residues 188–212 (IACP…LLIH), 217–239 (HVCA…FLVH), 245–269 (FRCT…VRIH), and 275–299 (FVCP…ILTH). Glycyl lysine isopeptide (Lys-Gly) (interchain with G-Cter in ubiquitin) cross-links involve residues Lys231 and Lys233.

This sequence belongs to the krueppel C2H2-type zinc-finger protein family. Polyubiquitinated by RNF12, leading to proteasomal degradation. Expressed in kidney, epidermal keratinocytes, prostate epithelial cells, bronchial and small airway lung epithelial cells (at protein level). Expressed in malignant kidney and several carcinoma cell lines (at protein level). Expressed in embryonic stem cells, kidney, epidermal keratinocytes, prostate epithelial cells, bronchial and small airway lung epithelial cells. Expressed in embryonal carcinomas, seminomas, malignant kidney and several carcinoma cell lines.

It is found in the nucleus. Functionally, involved in the reprogramming of X-chromosome inactivation during the acquisition of pluripotency. Required for efficient elongation of TSIX, a non-coding RNA antisense to XIST. Binds DXPas34 enhancer within the TSIX promoter. Involved in ES cell self-renewal. This is Zinc finger protein 42 homolog (ZFP42) from Homo sapiens (Human).